A 336-amino-acid chain; its full sequence is Non-structural maintenance of chromosomes element 1 (336 aa).

The segment at 268 to 327 (LNTCQNCHKLAIQGVRCGNESCREENEETGENSLSQIWHVDCFKHYITHVSKNCDRCGSS) adopts an RING-type; atypical zinc-finger fold.

The protein belongs to the NSE1 family. In terms of assembly, component of the Smc5-Smc6 complex which consists of KRE29, MMS21, NSE1, NSE3, NSE4, NSE5, SMC5 and SMC6. Interacts with SMC5 and SMC6. Interacts with NSE3.

The protein localises to the nucleus. The enzyme catalyses S-ubiquitinyl-[E2 ubiquitin-conjugating enzyme]-L-cysteine + [acceptor protein]-L-lysine = [E2 ubiquitin-conjugating enzyme]-L-cysteine + N(6)-ubiquitinyl-[acceptor protein]-L-lysine.. In terms of biological role, acts in a DNA repair pathway for removal of UV-induced DNA damage that is distinct from classical nucleotide excision repair and in repair of ionizing radiation damage. Functions in homologous recombination repair of DNA double strand breaks and in recovery of stalled replication forks. This chain is Non-structural maintenance of chromosomes element 1 (NSE1), found in Saccharomyces cerevisiae (strain ATCC 204508 / S288c) (Baker's yeast).